We begin with the raw amino-acid sequence, 157 residues long: Transcription elongation factor GreA (157 aa).

The stretch at 14-37 (LRKELERLLKRRPLITEAIAEARE) forms a coiled coil.

Belongs to the GreA/GreB family.

Its function is as follows. Necessary for efficient RNA polymerase transcription elongation past template-encoded arresting sites. The arresting sites in DNA have the property of trapping a certain fraction of elongating RNA polymerases that pass through, resulting in locked ternary complexes. Cleavage of the nascent transcript by cleavage factors such as GreA or GreB allows the resumption of elongation from the new 3'terminus. GreA releases sequences of 2 to 3 nucleotides. In Vibrio vulnificus (strain CMCP6), this protein is Transcription elongation factor GreA.